The following is a 195-amino-acid chain: Cholesin (195 aa).

The segment at 1 to 78 is disordered; it reads MAKHKRKGLE…KEEKKRLREA (78 aa). 2 stretches are compositionally biased toward basic and acidic residues: residues 8–18 and 26–39; these read GLEGTGKESKR and ETPR…DKET. Residues S41, S48, and S52 each carry the phosphoserine modification. A compositionally biased stretch (basic and acidic residues) spans 53-77; sequence PEERRVLERKLKKERKKEEKKRLRE. S96 bears the Phosphoserine mark.

Secreted via exosomes, secreted from the instestine, secretion is induced by feeding and cholesterol absorption. Expressed in enterocytes.

It is found in the secreted. Its function is as follows. Hormone secreted from the intestine in response to cholesterol, where it acts to inhibit cholesterol synthesis in the liver and VLDL secretion,leading to a reduction in circulating cholesterol levels. Acts through binding to its receptor, GPR146. The chain is Cholesin (Chlsn) from Mus musculus (Mouse).